We begin with the raw amino-acid sequence, 200 residues long: Histone H1 (200 aa).

Residues methionine 1–alanine 14 show a composition bias toward low complexity. Disordered regions lie at residues methionine 1–threonine 20 and aspartate 78–alanine 200. One can recognise an H15 domain in the interval threonine 18–lysine 93. The segment covering lysine 94–lysine 116 has biased composition (low complexity). The span at lysine 120 to proline 131 shows a compositional bias: basic and acidic residues. Low complexity predominate over residues threonine 159–lysine 185.

It belongs to the histone H1/H5 family.

The protein resides in the nucleus. Its subcellular location is the chromosome. In terms of biological role, could act as an H1-type linker histone. This is Histone H1 (hhoA) from Emericella nidulans (strain FGSC A4 / ATCC 38163 / CBS 112.46 / NRRL 194 / M139) (Aspergillus nidulans).